The following is a 190-amino-acid chain: COMM domain-containing protein 1 (190 aa).

Alanine 2 is modified (N-acetylalanine). A sufficient for interaction with SLC12A2 region spans residues alanine 2 to serine 123. The Cu cation site is built by histidine 101, methionine 110, and histidine 134. Residues glycine 118–isoleucine 186 enclose the COMM domain. The interval arginine 125–asparagine 190 is required for binding to PtdIns(4,5)P2.

The protein belongs to the COMM domain-containing protein 1 family. Component of the commander complex consisting of the CCC subcomplex and the retriever subcomplex. Component of the CCC (COMMD/CCDC22/CCDC93) subcomplex consisting of COMMD1, COMMD2, COMMD3, COMMD4, COMMD5, COMMD6, COMMD7, COMMD8, COMMD9, COMMD10, CCDC22 and CCDC93; within the complex forms a heterodimer with COMMD6. Interacts with VPS35L; the interaction associates the CCC complex with the retriever complex. Identified in a complex with an E3 ubiquitin ligase complex composed of TCEB1/elongin C, CUL2, SOCS1 and RBX1; in the complex interacts directly with SOCS1 and CUL2. Identified in a complex with NF-kappa-B. Interacts directly with SLC12A2. Interacts directly with ATP7B (via the N-terminal region). Interacts with ATP7A. Interacts with FAM107A; this interaction stabilizes COMMD1 in the nucleus. Interacts with CCS, CDKN2A, RELA, REL, RELB, NFKB1/p105, NFKB2/p100, NFKBIB, SCNN1D, SCNN1B, CFTR, CLU, SGK1, AKT1, CUL1, CUL2, CUL3, CUL4A, CUL4B, CUL5, CUL7, HIF1A. Post-translationally, acetylated by EP300 ina stimuli-specific manner; protecting it from XIAP-mediated proteasomal degradation and required for interaction with RElA in response to stress. In terms of processing, ubiquitinated; undergoes both 'Lys-63'- and 'Lys-48'-linked polyubiquitination. Ubiquitinated by XIAP, leading to its proteasomal degradation. As to expression, ubiquitous. Highest expression in the liver, with lower expression in brain, lung, placenta, pancreas, small intestine, heart, skeletal muscle, kidney and placenta. Down-regulated in cancer tissues.

The protein resides in the nucleus. It is found in the cytoplasm. It localises to the endosome membrane. Its subcellular location is the cytoplasmic vesicle. The protein localises to the early endosome. The protein resides in the recycling endosome. In terms of biological role, scaffold protein in the commander complex that is essential for endosomal recycling of transmembrane cargos; the commander complex is composed of the CCC subcomplex and the retriever subcomplex. Can modulate activity of cullin-RING E3 ubiquitin ligase (CRL) complexes by displacing CAND1; in vitro promotes CRL E3 activity and dissociates CAND1 from CUL1 and CUL2. Promotes ubiquitination of NF-kappa-B subunit RELA and its subsequent proteasomal degradation. Down-regulates NF-kappa-B activity. Involved in the regulation of membrane expression and ubiquitination of SLC12A2. Modulates Na(+) transport in epithelial cells by regulation of apical cell surface expression of amiloride-sensitive sodium channel (ENaC) subunits and by promoting their ubiquitination presumably involving NEDD4L. Promotes the localization of SCNN1D to recycling endosomes. Promotes CFTR cell surface expression through regulation of its ubiquitination. Down-regulates SOD1 activity by interfering with its homodimerization. Plays a role in copper ion homeostasis. Involved in copper-dependent ATP7A trafficking between the trans-Golgi network and vesicles in the cell periphery; the function is proposed to depend on its association within the CCC complex and cooperation with the WASH complex on early endosomes. Can bind one copper ion per monomer. May function to facilitate biliary copper excretion within hepatocytes. Binds to phosphatidylinositol 4,5-bisphosphate (PtdIns(4,5)P2). Involved in the regulation of HIF1A-mediated transcription; competes with ARNT/Hif-1-beta for binding to HIF1A resulting in decreased DNA binding and impaired transcriptional activation by HIF-1. Negatively regulates neuroblastoma G1/S phase cell cycle progression and cell proliferation by stimulating ubiquitination of NF-kappa-B subunit RELA and NF-kappa-B degradation in a FAM107A- and actin-dependent manner. This is COMM domain-containing protein 1 (COMMD1) from Homo sapiens (Human).